The chain runs to 190 residues: Protein soem-1 (190 aa).

The SH2 domain maps to 96–190; the sequence is YMEQNMNRVE…LVLKNQLKPV (95 aa).

As to quaternary structure, interacts with abl-1. In terms of tissue distribution, expressed in PQR, but not AQR, Q neuroblast descendents.

Its function is as follows. Functions downstream of migratory protein mig-13 and may play a role in the control of Q neuroblast migration during larval development. The polypeptide is Protein soem-1 (Caenorhabditis elegans).